We begin with the raw amino-acid sequence, 125 residues long: Histone H1-like protein Hc1 (125 aa).

The interval 98–125 (TKAKVKPTKKAAPKTKVKTAKKTRSTKK) is disordered. The segment covering 100-125 (AKVKPTKKAAPKTKVKTAKKTRSTKK) has biased composition (basic residues).

It belongs to the histone H1/H5 family. HCT subfamily.

Functionally, might have a role analogous to that of eukaryotic histone proteins. The sequence is that of Histone H1-like protein Hc1 (hctA) from Chlamydia trachomatis serovar L2 (strain ATCC VR-902B / DSM 19102 / 434/Bu).